The chain runs to 1816 residues: uncharacterized protein (1816 aa).

2 disordered regions span residues 338 to 357 and 562 to 605; these read DSSS…NNNN and ELEK…IKPK. Positions 339-357 are enriched in low complexity; it reads SSSSSSNNNNNNNNNNNNN. The span at 562 to 577 shows a compositional bias: basic and acidic residues; sequence ELEKERIKKEKEDSKK. Over residues 581–603 the composition is skewed to low complexity; the sequence is KQSSSSSSSSTTTTSTTTSSTIK. In terms of domain architecture, Helicase ATP-binding spans 826–999; it reads LDIVDKRESA…FLKKIDPNRK (174 aa). 839–846 is an ATP binding site; it reads ASTSSGKT. Positions 949-952 match the DEAH box motif; the sequence is DEVH. The 182-residue stretch at 1198-1379 folds into the Helicase C-terminal domain; sequence QLDLVIERFQ…SVVSPSLCLS (182 aa). A disordered region spans residues 1388-1487; the sequence is TNGSANKSNE…TTTKTPTTTS (100 aa). Positions 1395-1427 are enriched in basic and acidic residues; it reads SNEENKVQVKENEKEREKEKEKEKEKEKEKETI. A compositionally biased stretch (acidic residues) spans 1445 to 1454; the sequence is NWDDDEEETA. A compositionally biased stretch (low complexity) spans 1456-1487; the sequence is STKTTPATTPTTTTTENTPATTTTTKTPTTTS.

It belongs to the helicase family. SKI2 subfamily.

Its subcellular location is the nucleus. This is an uncharacterized protein from Dictyostelium discoideum (Social amoeba).